Reading from the N-terminus, the 110-residue chain is Inner kinetochore subunit mhf1 (110 aa).

The protein belongs to the TAF9 family. CENP-S/MHF1 subfamily. In terms of assembly, the MHF histone-fold complex is a heterotetramer of 2 mhf1-mhf2 heterodimers. Component of the inner kinetochore constitutive centromere-associated network (CCAN) (also known as central kinetochore Sim4 complex in fission yeast), which is composed of at least cnl2, cnp3, cnp20, fta1, fta2, fta3, fta4, fta6, fta7, mal2, mhf1, mhf2, mis6, mis15, mis17, sim4 and wip1.

Its subcellular location is the nucleus. In terms of biological role, component of a FANCM-MHF complex that promotes gene conversion at blocked replication forks, probably by reversal of the stalled fork. FANCM-MHF promotes non-crossover recombination. This Schizosaccharomyces pombe (strain 972 / ATCC 24843) (Fission yeast) protein is Inner kinetochore subunit mhf1.